Reading from the N-terminus, the 1111-residue chain is Probable arabinosyltransferase A (1111 aa).

Transmembrane regions (helical) follow at residues 12-34 (IIRL…VPLL), 205-224 (IAVG…LSAL), 333-355 (VWMR…HWVL), 370-387 (VAVL…LPFN), 394-413 (PLIA…AIAL), 423-445 (AVVA…ALLT), 462-484 (GLLA…VFHS), 530-547 (FPVL…VVLL), 554-576 (GLAS…LLTF), 581-603 (WAIQ…AFAF), 615-637 (TVYI…GWFG), 652-674 (IAGH…LAGG), and 695-717 (FLAT…GSLA). A disordered region spans residues 804–831 (GLVNSDASPNKPNVTFSDSAGTAGGKGP). The segment covering 808-823 (SDASPNKPNVTFSDSA) has biased composition (polar residues).

The protein belongs to the emb family.

Its subcellular location is the cell membrane. In terms of biological role, arabinosyl transferase responsible for the polymerization of arabinose into the arabinan of arabinogalactan. In Mycobacterium leprae (strain TN), this protein is Probable arabinosyltransferase A (embA).